Consider the following 147-residue polypeptide: Hemoglobin subunit beta (147 aa).

An N-acetylvaline modification is found at valine 2. The region spanning 3–147 (HLTGEEKSAV…VANALAHKYH (145 aa)) is the Globin domain. Threonine 13 is subject to Phosphothreonine. Serine 45 bears the Phosphoserine mark. Lysine 60 carries the post-translational modification N6-acetyllysine. Histidine 64 is a binding site for heme b. Position 83 is an N6-acetyllysine (lysine 83). Histidine 93 contributes to the heme b binding site. An S-nitrosocysteine modification is found at cysteine 94. The residue at position 145 (lysine 145) is an N6-acetyllysine.

It belongs to the globin family. In terms of assembly, heterotetramer of two alpha chains and two beta chains. In terms of tissue distribution, red blood cells.

Its function is as follows. Involved in oxygen transport from the lung to the various peripheral tissues. This chain is Hemoglobin subunit beta (HBB), found in Callithrix jacchus (White-tufted-ear marmoset).